The following is a 245-amino-acid chain: 1-(5-phosphoribosyl)-5-[(5-phosphoribosylamino)methylideneamino] imidazole-4-carboxamide isomerase (245 aa).

The Proton acceptor role is filled by Asp7. The active-site Proton donor is the Asp129.

The protein belongs to the HisA/HisF family.

It is found in the cytoplasm. It catalyses the reaction 1-(5-phospho-beta-D-ribosyl)-5-[(5-phospho-beta-D-ribosylamino)methylideneamino]imidazole-4-carboxamide = 5-[(5-phospho-1-deoxy-D-ribulos-1-ylimino)methylamino]-1-(5-phospho-beta-D-ribosyl)imidazole-4-carboxamide. It participates in amino-acid biosynthesis; L-histidine biosynthesis; L-histidine from 5-phospho-alpha-D-ribose 1-diphosphate: step 4/9. This chain is 1-(5-phosphoribosyl)-5-[(5-phosphoribosylamino)methylideneamino] imidazole-4-carboxamide isomerase, found in Klebsiella pneumoniae subsp. pneumoniae (strain ATCC 700721 / MGH 78578).